A 194-amino-acid polypeptide reads, in one-letter code: MTAIKLIVGLGNPGAEYEQTRHNAGALFVERIAHAQGINLVADRKYFGLTGRFSHQGQDVRLLIPTTYMNRSGQAVAALAGFFRIKPEEILVAHDELDLPPGVAKLKLGGGHGGHNGLRDIIAQLGNQNNFYRLRLGIGHPGVASMVSNFVLGRAPRAEQEKLDASIDFVLGVLPDIFAGEWNRAMKNLHSQKA.

TRNA is bound at residue Tyr17. His22 (proton acceptor) is an active-site residue. TRNA is bound by residues Tyr68, Asn70, and Asn116.

It belongs to the PTH family. In terms of assembly, monomer.

It is found in the cytoplasm. It carries out the reaction an N-acyl-L-alpha-aminoacyl-tRNA + H2O = an N-acyl-L-amino acid + a tRNA + H(+). In terms of biological role, hydrolyzes ribosome-free peptidyl-tRNAs (with 1 or more amino acids incorporated), which drop off the ribosome during protein synthesis, or as a result of ribosome stalling. Its function is as follows. Catalyzes the release of premature peptidyl moieties from peptidyl-tRNA molecules trapped in stalled 50S ribosomal subunits, and thus maintains levels of free tRNAs and 50S ribosomes. In Pseudomonas fluorescens (strain SBW25), this protein is Peptidyl-tRNA hydrolase.